The primary structure comprises 292 residues: ATP synthase gamma chain (292 aa).

It belongs to the ATPase gamma chain family. As to quaternary structure, F-type ATPases have 2 components, CF(1) - the catalytic core - and CF(0) - the membrane proton channel. CF(1) has five subunits: alpha(3), beta(3), gamma(1), delta(1), epsilon(1). CF(0) has three main subunits: a, b and c.

The protein localises to the cell membrane. Functionally, produces ATP from ADP in the presence of a proton gradient across the membrane. The gamma chain is believed to be important in regulating ATPase activity and the flow of protons through the CF(0) complex. This is ATP synthase gamma chain from Caldicellulosiruptor saccharolyticus (strain ATCC 43494 / DSM 8903 / Tp8T 6331).